Reading from the N-terminus, the 340-residue chain is Holliday junction branch migration complex subunit RuvB (340 aa).

Residues 1–184 (MNENLDPTNQ…FGIQSRLQYY (184 aa)) are large ATPase domain (RuvB-L). ATP is bound by residues Leu-23, Arg-24, Gly-65, Lys-68, Thr-69, Thr-70, 131-133 (EDF), Arg-174, Tyr-184, and Arg-221. Thr-69 provides a ligand contact to Mg(2+). Residues 185-255 (NAELLTTIVQ…IAKFALNALH (71 aa)) are small ATPAse domain (RuvB-S). Positions 258 to 340 (AHGLDEMDNK…VKANVQGGLF (83 aa)) are head domain (RuvB-H). DNA is bound by residues Arg-313 and Arg-318.

It belongs to the RuvB family. In terms of assembly, homohexamer. Forms an RuvA(8)-RuvB(12)-Holliday junction (HJ) complex. HJ DNA is sandwiched between 2 RuvA tetramers; dsDNA enters through RuvA and exits via RuvB. An RuvB hexamer assembles on each DNA strand where it exits the tetramer. Each RuvB hexamer is contacted by two RuvA subunits (via domain III) on 2 adjacent RuvB subunits; this complex drives branch migration. In the full resolvosome a probable DNA-RuvA(4)-RuvB(12)-RuvC(2) complex forms which resolves the HJ.

The protein localises to the cytoplasm. The enzyme catalyses ATP + H2O = ADP + phosphate + H(+). The RuvA-RuvB-RuvC complex processes Holliday junction (HJ) DNA during genetic recombination and DNA repair, while the RuvA-RuvB complex plays an important role in the rescue of blocked DNA replication forks via replication fork reversal (RFR). RuvA specifically binds to HJ cruciform DNA, conferring on it an open structure. The RuvB hexamer acts as an ATP-dependent pump, pulling dsDNA into and through the RuvAB complex. RuvB forms 2 homohexamers on either side of HJ DNA bound by 1 or 2 RuvA tetramers; 4 subunits per hexamer contact DNA at a time. Coordinated motions by a converter formed by DNA-disengaged RuvB subunits stimulates ATP hydrolysis and nucleotide exchange. Immobilization of the converter enables RuvB to convert the ATP-contained energy into a lever motion, pulling 2 nucleotides of DNA out of the RuvA tetramer per ATP hydrolyzed, thus driving DNA branch migration. The RuvB motors rotate together with the DNA substrate, which together with the progressing nucleotide cycle form the mechanistic basis for DNA recombination by continuous HJ branch migration. Branch migration allows RuvC to scan DNA until it finds its consensus sequence, where it cleaves and resolves cruciform DNA. The protein is Holliday junction branch migration complex subunit RuvB of Flavobacterium psychrophilum (strain ATCC 49511 / DSM 21280 / CIP 103535 / JIP02/86).